An 87-amino-acid polypeptide reads, in one-letter code: Small ribosomal subunit protein bS20 (87 aa).

This sequence belongs to the bacterial ribosomal protein bS20 family.

Its function is as follows. Binds directly to 16S ribosomal RNA. The sequence is that of Small ribosomal subunit protein bS20 from Nitrosomonas europaea (strain ATCC 19718 / CIP 103999 / KCTC 2705 / NBRC 14298).